A 662-amino-acid polypeptide reads, in one-letter code: Sodium/glucose cotransporter 1 (662 aa).

Topologically, residues 1–24 (MDSSTWSPATTATTEPLKPHERIR) are extracellular. Residues 25-47 (NAADISVIVIYFVVVMAVGLWAM) form a helical membrane-spanning segment. Topologically, residues 48–66 (CSTNRGTVGGFFLAGRSMV) are cytoplasmic. A helical membrane pass occupies residues 67–90 (WWPVGASLFASNIGSGHFVGLAGT). At 91-95 (GAAAG) the chain is on the extracellular side. The helical transmembrane segment at 96–117 (IATGGFEWNALIWVVVLGWLFV) threads the bilayer. At 118–139 (PIYIKAGVVTMPEYLRKRFGGK) the chain is on the cytoplasmic side. Residues 140–169 (RIQVYLSILSLMLYIFTKISADIFSGAIFI) traverse the membrane as a helical segment. The Extracellular segment spans residues 170–176 (TLALGLD). A helical transmembrane segment spans residues 177 to 193 (LYLAIFLLLAITGLYTI). The Cytoplasmic segment spans residues 194 to 202 (TGGLAAVIY). A helical transmembrane segment spans residues 203-221 (TDTLQTAIMLVGSFILTGF). Residues 222–275 (AFHEVGGYDAFMEKYMNAIPTVISDGNITIKKECYTPRADSFHIFRDPLKGDLP) lie on the Extracellular side of the membrane. N-linked (GlcNAc...) asparagine glycosylation occurs at asparagine 248. Cystine bridges form between cysteine 255–cysteine 511, cysteine 255–cysteine 608, cysteine 345–cysteine 351, cysteine 355–cysteine 361, and cysteine 517–cysteine 522. Residues 276-295 (WPGLTFGLSILALWYWCTDQ) traverse the membrane as a helical segment. The Cytoplasmic segment spans residues 296 to 309 (VIVQRCLSAKNMSH). Residues 310–331 (VKAGCVMCGYFKLLPMFVIVMP) traverse the membrane as a helical segment. The Extracellular segment spans residues 332 to 375 (GMISRVLYTEKIACTVPSECEKYCGTKVGCSNIAYPTLVVELMP). Residues 376–406 (NGLRGLMLSVMLASLMSSLTSIFNSASTLFT) form a helical membrane-spanning segment. Residues 407 to 422 (MDVYTKIRKRASEKEL) lie on the Cytoplasmic side of the membrane. Residues 423–444 (MIAGRLFILVLIGISIAWVPIV) form a helical membrane-spanning segment. Over 445–451 (QSAQSGQ) the chain is Extracellular. A helical membrane pass occupies residues 452-477 (LFDYIQSVTSYLGPPIAAVFLLAIFC). Topologically, residues 478 to 481 (KRVN) are cytoplasmic. Residues 482–504 (EEGAFWGLVIGCMIGLARMITEF) traverse the membrane as a helical segment. The Extracellular segment spans residues 505–525 (AYGTGSCVEPSNCPTIICGVH). A helical membrane pass occupies residues 526–547 (YLYFAIILFVISIIIVLVVSLF). The Cytoplasmic segment spans residues 548–642 (TKPIPDVHLY…TSEKPLWRTV (95 aa)). Threonine 587 is modified (phosphothreonine). Residues 643-660 (VNINGIILLTVAVFCHAY) traverse the membrane as a helical segment. Over 661-662 (FA) the chain is Extracellular.

Belongs to the sodium:solute symporter (SSF) (TC 2.A.21) family. N-glycosylation is not necessary for the cotransporter function.

It is found in the apical cell membrane. It carries out the reaction D-glucose(out) + 2 Na(+)(out) = D-glucose(in) + 2 Na(+)(in). It catalyses the reaction D-galactose(out) + 2 Na(+)(out) = D-galactose(in) + 2 Na(+)(in). Its activity is regulated as follows. Enhanced by the interaction with PDZK1IP1/MAP17; but unlike SLC5A2/SGLT2, PDZK1IP1 is not essential for SLC5A1 transporter activity. Possibly modulated by cholesterol binding. In terms of biological role, electrogenic Na(+)-coupled sugar symporter that actively transports D-glucose or D-galactose at the plasma membrane, with a Na(+) to sugar coupling ratio of 2:1. Transporter activity is driven by a transmembrane Na(+) electrochemical gradient set by the Na(+)/K(+) pump. Has a primary role in the transport of dietary monosaccharides from enterocytes to blood. Responsible for the absorption of D-glucose or D-galactose across the apical brush-border membrane of enterocytes, whereas basolateral exit is provided by GLUT2. Additionally, functions as a D-glucose sensor in enteroendocrine cells, triggering the secretion of the incretins GCG and GIP that control food intake and energy homeostasis. Together with SGLT2, functions in reabsorption of D-glucose from glomerular filtrate, playing a nonredundant role in the S3 segment of the proximal tubules. Transports D-glucose into endometrial epithelial cells, controlling glycogen synthesis and nutritional support for the embryo as well as the decidual transformation of endometrium prior to conception. Acts as a water channel enabling passive water transport in response to the osmotic gradient created upon sugar and Na(+) uptake. Has high water conductivity comparable to aquaporins and therefore is expected to play an important role in transepithelial water permeability, especially in the small intestine. This Sus scrofa (Pig) protein is Sodium/glucose cotransporter 1 (SLC5A1).